A 32-amino-acid chain; its full sequence is uncharacterized protein (32 aa).

Residues 3 to 23 form a helical membrane-spanning segment; the sequence is IGIIFPVVIFITAVVFLAWFF.

It is found in the cell inner membrane. This is an uncharacterized protein from Escherichia coli (strain K12).